Here is a 123-residue protein sequence, read N- to C-terminus: Small ribosomal subunit protein uS12 (123 aa).

Asp89 is subject to 3-methylthioaspartic acid. Positions 104-123 are disordered; that stretch reads SVGVKDRKKSRSKYGAKRPK. Residues 109 to 123 are compositionally biased toward basic residues; that stretch reads DRKKSRSKYGAKRPK.

The protein belongs to the universal ribosomal protein uS12 family. Part of the 30S ribosomal subunit. Contacts proteins S8 and S17. May interact with IF1 in the 30S initiation complex.

Functionally, with S4 and S5 plays an important role in translational accuracy. Its function is as follows. Interacts with and stabilizes bases of the 16S rRNA that are involved in tRNA selection in the A site and with the mRNA backbone. Located at the interface of the 30S and 50S subunits, it traverses the body of the 30S subunit contacting proteins on the other side and probably holding the rRNA structure together. The combined cluster of proteins S8, S12 and S17 appears to hold together the shoulder and platform of the 30S subunit. The protein is Small ribosomal subunit protein uS12 of Pelobacter propionicus (strain DSM 2379 / NBRC 103807 / OttBd1).